A 763-amino-acid polypeptide reads, in one-letter code: Phosphoglycerol transferase I (763 aa).

The next 4 helical transmembrane spans lie at 1–21 (MSEL…AWKA), 26–46 (WWFA…ITLF), 77–97 (ILPG…LGWI), and 108–128 (FGYS…SPAF).

The protein belongs to the OpgB family.

It localises to the cell inner membrane. It catalyses the reaction a phosphatidylglycerol + a membrane-derived-oligosaccharide D-glucose = a 1,2-diacyl-sn-glycerol + a membrane-derived-oligosaccharide 6-(glycerophospho)-D-glucose.. Its pathway is glycan metabolism; osmoregulated periplasmic glucan (OPG) biosynthesis. In terms of biological role, transfers a phosphoglycerol residue from phosphatidylglycerol to the membrane-bound nascent glucan backbones. This is Phosphoglycerol transferase I from Escherichia coli (strain SMS-3-5 / SECEC).